The primary structure comprises 292 residues: Protease HtpX (292 aa).

Helical transmembrane passes span 5–25 (VVLF…VMSV) and 34–54 (SGLL…SLLL). H140 contributes to the Zn(2+) binding site. E141 is an active-site residue. H144 lines the Zn(2+) pocket. Transmembrane regions (helical) follow at residues 155–175 (LLQG…GGII) and 193–213 (IIVF…AMWF). Zn(2+) is bound at residue E218.

The protein belongs to the peptidase M48B family. Zn(2+) is required as a cofactor.

It localises to the cell inner membrane. The polypeptide is Protease HtpX (Xanthomonas campestris pv. campestris (strain B100)).